We begin with the raw amino-acid sequence, 221 residues long: LHFPL tetraspan subfamily member 5 protein (221 aa).

The Cytoplasmic portion of the chain corresponds to 1–24 (MPKLLPAQEAARIYHTNYVRNARA). A helical transmembrane segment spans residues 25 to 45 (MGVLWALFTLCFSILMVVTFI). The Extracellular segment spans residues 46–98 (QPYWIGDSIDTPQAGYFGLFSYCIGNALTGELICKGSPLDFGTIPSSAFKTAM). Residues 99–119 (FFVGISTFLIIGSILCFSLFF) traverse the membrane as a helical segment. At 120–128 (FCNAATVYK) the chain is on the cytoplasmic side. Residues 129–149 (VCAWMQLAAATGLMIGCLIYP) form a helical membrane-spanning segment. Residues 150–179 (DGWDSSEVKRMCGDKTDKYTLGACTVRWAY) lie on the Extracellular side of the membrane. Residues 180-200 (ILCIIGILDALILSFLAFVLG) form a helical membrane-spanning segment. Over 201–221 (NRQDNLLPSDFKVESKEEGNE) the chain is Cytoplasmic.

It belongs to the LHFP family.

It is found in the cell membrane. Its function is as follows. Probable component of the mechanotransducer (MET) non-specific cation channel complex. The sequence is that of LHFPL tetraspan subfamily member 5 protein from Gallus gallus (Chicken).